Here is a 154-residue protein sequence, read N- to C-terminus: Small ribosomal subunit protein uS19 (154 aa).

The protein belongs to the universal ribosomal protein uS19 family.

The polypeptide is Small ribosomal subunit protein uS19 (RPS15) (Oryza sativa subsp. japonica (Rice)).